A 693-amino-acid chain; its full sequence is MKIFREVFELGNKEIILETGGMARQADGSVTVSCGNNVVLVTTVVKKSVADGTDFFPLSVHYLEKTYAAGKIPGGFLRREGRPSEEQILISRLIDRSIRPSFPDGFFNEIQIVATVLSYDGAFSPDILALIGASASLAISGAPYDDVVAGVRVGYTNGKYILNPNKQDLRDSDLDLVVSGTDDAILMVESEANSLPESVMLGGILYAHKHLKTIINSINRLAKVASKPRIEYSIYQINKFLKSQIKSQFFGEIKNAYTIASKQERNLKLNAIRKNVLEYIFSSDVDGNEYTEKEILEAFHDIEKDLVRSNILEGKPRIDGRCTETIRPINVKIGVLPGVHGSALFTRGETQALVVTTLGSDRDAQLVESLDGIEKCRYMLHYNFPPYSVGECGMVGMAPKRREIGHANLAKRATQAVFPNEEAYPYVVRVVSEILESNGSSSMATVCGSSLSMMDAGVPIAEPVAGIAMGLIKDGAKYAVLSDILGDEDHLGDMDFKVAGTRYGVTALQMDIKIKGISREILEQALEQARAGRLHILGIMNEVIKEHKEAVSDVAPQIHVMNINPAKIKDVVGRGGATVKGIVEKTGAQIDTSDSGEVKVFAKDKKSMDMAVAMIEEIVAEVEEGQVYKGKIVKLLDSGVFVNLLGSQDGYLPFSEIEQAGMKTNSLVEGQGLEVLVQNIDRGGRVKLSLVAR.

Positions 489 and 495 each coordinate Mg(2+). Residues 556 to 615 (PQIHVMNINPAKIKDVVGRGGATVKGIVEKTGAQIDTSDSGEVKVFAKDKKSMDMAVAMI) enclose the KH domain. In terms of domain architecture, S1 motif spans 625-693 (GQVYKGKIVK…GRVKLSLVAR (69 aa)).

It belongs to the polyribonucleotide nucleotidyltransferase family. In terms of assembly, component of the RNA degradosome, which is a multiprotein complex involved in RNA processing and mRNA degradation. Requires Mg(2+) as cofactor.

The protein localises to the cytoplasm. The catalysed reaction is RNA(n+1) + phosphate = RNA(n) + a ribonucleoside 5'-diphosphate. Functionally, involved in mRNA degradation. Catalyzes the phosphorolysis of single-stranded polyribonucleotides processively in the 3'- to 5'-direction. The protein is Polyribonucleotide nucleotidyltransferase of Francisella tularensis subsp. tularensis (strain FSC 198).